The chain runs to 216 residues: Large ribosomal subunit protein uL3 (216 aa).

Positions 134–153 (RATHGNSRSHNVPGSIGMAQ) are disordered. At Q153 the chain carries N5-methylglutamine.

It belongs to the universal ribosomal protein uL3 family. As to quaternary structure, part of the 50S ribosomal subunit. Forms a cluster with proteins L14 and L19. Methylated by PrmB.

Its function is as follows. One of the primary rRNA binding proteins, it binds directly near the 3'-end of the 23S rRNA, where it nucleates assembly of the 50S subunit. In Cupriavidus pinatubonensis (strain JMP 134 / LMG 1197) (Cupriavidus necator (strain JMP 134)), this protein is Large ribosomal subunit protein uL3.